A 100-amino-acid polypeptide reads, in one-letter code: Aspartyl/glutamyl-tRNA(Asn/Gln) amidotransferase subunit C (100 aa).

This sequence belongs to the GatC family. As to quaternary structure, heterotrimer of A, B and C subunits.

The catalysed reaction is L-glutamyl-tRNA(Gln) + L-glutamine + ATP + H2O = L-glutaminyl-tRNA(Gln) + L-glutamate + ADP + phosphate + H(+). It carries out the reaction L-aspartyl-tRNA(Asn) + L-glutamine + ATP + H2O = L-asparaginyl-tRNA(Asn) + L-glutamate + ADP + phosphate + 2 H(+). Allows the formation of correctly charged Asn-tRNA(Asn) or Gln-tRNA(Gln) through the transamidation of misacylated Asp-tRNA(Asn) or Glu-tRNA(Gln) in organisms which lack either or both of asparaginyl-tRNA or glutaminyl-tRNA synthetases. The reaction takes place in the presence of glutamine and ATP through an activated phospho-Asp-tRNA(Asn) or phospho-Glu-tRNA(Gln). This Rickettsia peacockii (strain Rustic) protein is Aspartyl/glutamyl-tRNA(Asn/Gln) amidotransferase subunit C.